Here is a 789-residue protein sequence, read N- to C-terminus: Spermatogenesis-associated protein 20 (789 aa).

Basic residues predominate over residues 1–19 (MSHHSPPPPKHKGEHKGHG). The tract at residues 1–65 (MSHHSPPPPK…CPPPAPQKTA (65 aa)) is disordered. Serine 5 and serine 652 each carry phosphoserine.

In terms of tissue distribution, testis-specific and age-dependent (at protein level). Highly expressed. Expressed in round spermatids located in the inner half-layer of the seminiferous epithelium as well as in early elongated spermatids having cytoplasmic protrusions into the tubular lumen.

The protein localises to the secreted. Functionally, may play a role in fertility regulation. This chain is Spermatogenesis-associated protein 20 (Spata20), found in Rattus norvegicus (Rat).